A 256-amino-acid chain; its full sequence is Fumarate reductase cytochrome b subunit (256 aa).

The Cytoplasmic portion of the chain corresponds to 1 to 30; that stretch reads MTNESILESYSGVTPERKKSRMPAKLDWWQ. The chain crosses the membrane as a helical span at residues 31–52; the sequence is SATGLFLGLFMIGHMFFVSTIL. A heme b-binding site is contributed by His44. Residues 53 to 76 lie on the Periplasmic side of the membrane; sequence LGDNVMLWVTKKFELDFIFEGGKP. Residues 77-98 traverse the membrane as a helical segment; that stretch reads IVVSFLAAFVFAVFIAHAFLAM. His93 lines the heme b pocket. Residues 99 to 124 are Cytoplasmic-facing; the sequence is RKFPINYRQYLTFKTHKDLMRHGDTT. Residues 125 to 149 form a helical membrane-spanning segment; sequence LWWIQAMTGFAMFFLGSVHLYIMMT. Residue His143 coordinates heme b. The Periplasmic segment spans residues 150-165; sequence QPQTIGPVSSSFRMVS. A helical membrane pass occupies residues 166-188; it reads EWMWPLYLVLLFAVELHGSVGLY. Position 182 (His182) interacts with heme b. The Cytoplasmic portion of the chain corresponds to 189–206; it reads RLAVKWGWFDGETPDKTR. Residues 207 to 230 form a helical membrane-spanning segment; that stretch reads ANLKKLKTLMSAFLIVLGLLTFGA. The Periplasmic portion of the chain corresponds to 231-256; it reads YVKKGLEQTDPNIDYKYFDYKRTHHR.

Belongs to the diheme cytochrome b FrdC family. Part of an enzyme complex containing three subunits: a flavoprotein (frdA), an iron-sulfur protein (frdB), and diheme cytochrome b (frdC). It depends on heme b as a cofactor.

It is found in the cell inner membrane. The fumarate reductase enzyme complex is required for fumarate respiration using formate or sulfide as electron donor. This subunit anchors the complex in the membrane and binds a diheme cytochrome b. This Wolinella succinogenes (strain ATCC 29543 / DSM 1740 / CCUG 13145 / JCM 31913 / LMG 7466 / NCTC 11488 / FDC 602W) (Vibrio succinogenes) protein is Fumarate reductase cytochrome b subunit (frdC).